The primary structure comprises 360 residues: MSLSRLSIDAFRNIDSAQLAPGAGLNLIYGHNGSGKTSILEAIYFLGMGRSFRSHLSQRVIQNDADCLTLFAVAEGQAGDSRIGLRRHRSGDTEVKIDGEKVKRLSQLAEALPIQVITPESFSLLFEGPSARRQFIDWGAFHASKQFHLAWMNTRRILKQRNQLLRDGASYEHIAFWDKELIRYALEVTAIRNDYVGSLNGVLKGIIGEFLPDVDIRVSFTRGWDSKTDFSELLQSQYARDLAIGHTVSGPHKADLRLRVGNLPAQDALSRGQLKLLVCALRIAQGKLLKQQIDKHSIYLVDDLPSELDAKHRQLLLKELIDTGAQLFVTAIEPSAIVDSLPVPPDRMFHVQAGRVTQTK.

ATP is bound at residue glycine 30–threonine 37.

Belongs to the RecF family.

The protein resides in the cytoplasm. Its function is as follows. The RecF protein is involved in DNA metabolism; it is required for DNA replication and normal SOS inducibility. RecF binds preferentially to single-stranded, linear DNA. It also seems to bind ATP. In Shewanella amazonensis (strain ATCC BAA-1098 / SB2B), this protein is DNA replication and repair protein RecF.